Here is a 119-residue protein sequence, read N- to C-terminus: Large ribosomal subunit protein uL24 (119 aa).

This sequence belongs to the universal ribosomal protein uL24 family. In terms of assembly, part of the 50S ribosomal subunit.

One of two assembly initiator proteins, it binds directly to the 5'-end of the 23S rRNA, where it nucleates assembly of the 50S subunit. In terms of biological role, one of the proteins that surrounds the polypeptide exit tunnel on the outside of the subunit. The sequence is that of Large ribosomal subunit protein uL24 from Sulfurihydrogenibium sp. (strain YO3AOP1).